Reading from the N-terminus, the 209-residue chain is Uracil phosphoribosyltransferase (209 aa).

Residues Arg79, Arg104, and 131 to 139 (DPMLATGGS) each bind 5-phospho-alpha-D-ribose 1-diphosphate. Residues Ile194 and 199–201 (GDA) each bind uracil. Position 200 (Asp200) interacts with 5-phospho-alpha-D-ribose 1-diphosphate.

It belongs to the UPRTase family. In terms of assembly, homodimer. Mg(2+) is required as a cofactor.

It carries out the reaction UMP + diphosphate = 5-phospho-alpha-D-ribose 1-diphosphate + uracil. Its pathway is pyrimidine metabolism; UMP biosynthesis via salvage pathway; UMP from uracil: step 1/1. With respect to regulation, allosterically activated by GTP. Catalyzes the conversion of uracil and 5-phospho-alpha-D-ribose 1-diphosphate (PRPP) to UMP and diphosphate. This Bacillus caldolyticus protein is Uracil phosphoribosyltransferase.